Here is a 1059-residue protein sequence, read N- to C-terminus: Isoleucine--tRNA ligase (1059 aa).

The 'HIGH' region signature appears at 59 to 69 (PFANGLPHYGH). Positions 637-641 (KMSKS) match the 'KMSKS' region motif. Position 640 (Lys-640) interacts with ATP.

It belongs to the class-I aminoacyl-tRNA synthetase family. IleS type 2 subfamily. Monomer. Zn(2+) serves as cofactor.

The protein localises to the cytoplasm. It carries out the reaction tRNA(Ile) + L-isoleucine + ATP = L-isoleucyl-tRNA(Ile) + AMP + diphosphate. In terms of biological role, catalyzes the attachment of isoleucine to tRNA(Ile). As IleRS can inadvertently accommodate and process structurally similar amino acids such as valine, to avoid such errors it has two additional distinct tRNA(Ile)-dependent editing activities. One activity is designated as 'pretransfer' editing and involves the hydrolysis of activated Val-AMP. The other activity is designated 'posttransfer' editing and involves deacylation of mischarged Val-tRNA(Ile). The protein is Isoleucine--tRNA ligase of Mycobacterium leprae (strain TN).